The primary structure comprises 215 residues: Large ribosomal subunit protein uL4 (215 aa).

A disordered region spans residues 43 to 97 (RRQGTHSTKTRAEVSGGGKKPWRQKGTGRARAGSTRSPIWVGGGKTHTPKPRDYS).

Belongs to the universal ribosomal protein uL4 family. Part of the 50S ribosomal subunit.

One of the primary rRNA binding proteins, this protein initially binds near the 5'-end of the 23S rRNA. It is important during the early stages of 50S assembly. It makes multiple contacts with different domains of the 23S rRNA in the assembled 50S subunit and ribosome. Functionally, forms part of the polypeptide exit tunnel. The chain is Large ribosomal subunit protein uL4 from Brachyspira pilosicoli (Serpulina pilosicoli).